The primary structure comprises 476 residues: UDP-N-acetylmuramate--L-alanine ligase (476 aa).

123 to 129 contacts ATP; it reads GTHGKTT.

Belongs to the MurCDEF family.

Its subcellular location is the cytoplasm. The catalysed reaction is UDP-N-acetyl-alpha-D-muramate + L-alanine + ATP = UDP-N-acetyl-alpha-D-muramoyl-L-alanine + ADP + phosphate + H(+). It participates in cell wall biogenesis; peptidoglycan biosynthesis. Cell wall formation. The protein is UDP-N-acetylmuramate--L-alanine ligase of Nitrosococcus oceani (strain ATCC 19707 / BCRC 17464 / JCM 30415 / NCIMB 11848 / C-107).